A 153-amino-acid chain; its full sequence is Endoribonuclease YbeY (153 aa).

Zn(2+) contacts are provided by histidine 114, histidine 118, and histidine 124.

The protein belongs to the endoribonuclease YbeY family. Zn(2+) is required as a cofactor.

Its subcellular location is the cytoplasm. Functionally, single strand-specific metallo-endoribonuclease involved in late-stage 70S ribosome quality control and in maturation of the 3' terminus of the 16S rRNA. The polypeptide is Endoribonuclease YbeY (Shewanella baltica (strain OS155 / ATCC BAA-1091)).